A 245-amino-acid chain; its full sequence is MMKIDLNADLGEGCGNDALLMPLISSANIACGFHAGDAQTMRESVRLALAHGVAMGAHPGFADRENFGRTAMQLPPETIYAETLYQIGALAAIARAEGGRLAHVKPHGMLYNQAAKDAALADAIAQAVKDFDASLILVGLAGSELIRAGARYRLATREEVFADRGYLADGALVPRSEPGALIEDDDEAVSRTLMMVQEGRVRSRDGAWAAVNAQTVCLHGDGAHALAFARRLREAFDARQIQVSA.

Belongs to the LamB/PxpA family. As to quaternary structure, forms a complex composed of PxpA, PxpB and PxpC.

It catalyses the reaction 5-oxo-L-proline + ATP + 2 H2O = L-glutamate + ADP + phosphate + H(+). Functionally, catalyzes the cleavage of 5-oxoproline to form L-glutamate coupled to the hydrolysis of ATP to ADP and inorganic phosphate. The sequence is that of 5-oxoprolinase subunit A from Cronobacter sakazakii (strain ATCC BAA-894) (Enterobacter sakazakii).